We begin with the raw amino-acid sequence, 328 residues long: Organic solute transporter alpha-like protein (328 aa).

Topologically, residues 1–44 are extracellular; it reads MNASENYFTMDPTENISQVLDQNRNNTNSLRTHPTVEEYYENMT. N-linked (GlcNAc...) asparagine glycosylation is found at N2, N15, N25, and N42. Residues 45–65 traverse the membrane as a helical segment; the sequence is AFLSLAIFIASLLTILNISIF. Residues 66-84 are Cytoplasmic-facing; the sequence is ATTVSRLRRHLDKPLLGPS. The chain crosses the membrane as a helical span at residues 85 to 105; the sequence is IMMVGLYPIISVAALVTILVP. Y106 is a topological domain (extracellular). The chain crosses the membrane as a helical span at residues 107-127; it reads SWFICHTVMHVMFMVGGPVFR. The Cytoplasmic segment spans residues 128 to 177; sequence TLLFRYVGSEQNYVKETAGEAVQLNTPPCCCCCLCLPMVIPTKAKLCISR. A helical membrane pass occupies residues 178–198; it reads YMVWQMPFWQGSIMLVMNILY. Residues 199 to 208 are Extracellular-facing; that stretch reads YRDIQLYRQV. Residues 209 to 229 form a helical membrane-spanning segment; it reads MFFFIPFIVCSIVLGAWSLQI. The Cytoplasmic portion of the chain corresponds to 230-247; that stretch reads TVRMITKVRGDYQLRKKM. The chain crosses the membrane as a helical span at residues 248 to 265; it reads FCLQLVVMLCKLQYLVLY. Residues 266–287 lie on the Extracellular side of the membrane; the sequence is DQLDGIKMGGEYPINHTVYKQT. N280 carries an N-linked (GlcNAc...) asparagine glycan. Residues 288 to 308 traverse the membrane as a helical segment; it reads IINILILVEMVLVSMMVQSAY. Residues 309–328 lie on the Cytoplasmic side of the membrane; the sequence is RTPVQVQIDEVNKEKEVTRI.

It belongs to the OST-alpha family.

The protein resides in the cell membrane. Probable transporter. The sequence is that of Organic solute transporter alpha-like protein from Drosophila melanogaster (Fruit fly).